Here is an 852-residue protein sequence, read N- to C-terminus: Cell surface glycoprotein (852 aa).

A signal peptide spans 1 to 34; it reads MTDTTGKLRAVLLTALMVGSVIGAGVAFTGGAAA. A glycan (N-linked (GalNAc...) (glycosaminoglycan) asparagine) is linked at Asn-36. The tract at residues 84-131 is disordered; the sequence is KLDNEKEVSPATLSRTGGSDEGVPLQMPIPEDQSTGSYDSNGPDNDEA. Polar residues predominate over residues 115–126; that stretch reads DQSTGSYDSNGP. N-linked (Glc...) asparagine glycans are attached at residues Asn-339, Asn-398, Asn-438, Asn-513, Asn-643, Asn-727, Asn-751, and Asn-787. Residues 772–828 are disordered; it reads ELEEPDQTTVDQPENNQTMTTTMTETTTETTTEMTTTQENTTENGSEGTSDGESGGS. The span at 785-823 shows a compositional bias: low complexity; the sequence is ENNQTMTTTMTETTTETTTEMTTTQENTTENGSEGTSDG. 14 O-linked (Gal...) threonine glycosylation sites follow: Thr-789, Thr-791, Thr-792, Thr-793, Thr-795, Thr-797, Thr-798, Thr-799, Thr-801, Thr-802, Thr-803, Thr-806, Thr-807, and Thr-808. Asn-811 carries N-linked (Glc...) asparagine glycosylation. O-linked (Gal...) threonine glycosylation is found at Thr-812 and Thr-813. The N-linked (Glc...) asparagine glycan is linked to Asn-815. The chain crosses the membrane as a helical span at residues 829–849; it reads IPGFGVGVALVAVLGAALLAL. Positions 830–832 match the PGF sorting signal motif; the sequence is PGF.

It belongs to the halobacterial S-layer protein family. Post-translationally, N-linked glycan at Asn-36 consists of a glycosaminoglycan chain, constructed by a repeating sulfated pentasaccharide block composed of GlcNAc, GalNAc, Gal, GalA, 3-O-methyl-GalA, and sulfate in the molar ratio of 1:1:1:1:1:2; the other N-linked glycans contain Glc, GlcA and IdoA. O-linked glycans consist of Glc-Gal disaccharides. In terms of processing, the C-terminus (residues 770-778) is lipidated with diphytanylglyceryl phosphate. Post-translationally, cleaved by the archaeosortase ArtA at the C-terminus, with removal of a short hydrophobic segment.

It is found in the secreted. Its subcellular location is the cell wall. The protein resides in the S-layer. It localises to the cell membrane. In terms of biological role, S-layer protein. The S-layer is a paracrystalline mono-layered assembly of proteins which coat the surface of the cell. The protein is Cell surface glycoprotein (csg) of Halobacterium salinarum (strain ATCC 29341 / DSM 671 / R1).